Here is a 1425-residue protein sequence, read N- to C-terminus: Neuropathy target esterase sws (1425 aa).

The Lumenal segment spans residues 1–34 (MDVLEMLRASASGSYNTIFSDAWCQYVSKQITAT). Residues 35–55 (VYMYFALVMMSLLFIAWFLYF) traverse the membrane as a helical segment. The Cytoplasmic portion of the chain corresponds to 56–1425 (KRMARLRLRD…RSSPNNETKN (1370 aa)). Residue 174-301 (IFGHFEKPVF…IRVIQVIMIR (128 aa)) participates in a nucleoside 3',5'-cyclic phosphate binding. Composition is skewed to polar residues over residues 332–348 (TMSGPINSQTSQSSRQA) and 357–366 (SQMNLMQSAV). The segment at 332–410 (TMSGPINSQT…NPDGSFHGTT (79 aa)) is disordered. Residues 367-381 (SGTGSSGVSVTVTRP) show a composition bias toward low complexity. 2 positions are modified to phosphoserine: serine 444 and serine 453. A nucleoside 3',5'-cyclic phosphate is bound by residues 482 to 609 (ELGL…VVRR) and 598 to 727 (IVLD…HRFL). The PNPLA domain maps to 952–1118 (LVLGGGGARG…VNNLPADVMH (167 aa)). The short motif at 956–961 (GGGARG) is the GXGXXG element. The GXSXG motif lies at 983-987 (GVSIG). Residue serine 985 is the Nucleophile of the active site. Aspartate 1105 (proton acceptor) is an active-site residue. The DGA/G motif lies at 1105 to 1107 (DGG). Serine 1160 bears the Phosphoserine mark. The tract at residues 1330-1425 (LERKTDKSTQ…RSSPNNETKN (96 aa)) is disordered. The span at 1337-1347 (STQSSPPSNSR) shows a compositional bias: low complexity. A compositionally biased stretch (basic and acidic residues) spans 1348–1358 (SDMRGKEEARH). Over residues 1380–1403 (TKTQTGQEQELQQEQQDQGATAEQ) the composition is skewed to low complexity. The segment covering 1404-1416 (LVDKDKEENKENR) has biased composition (basic and acidic residues).

The protein belongs to the NTE family. In terms of assembly, interacts with Pka-C3; interaction inhibits the catalytic function of Pka-C3 and the esterase activity of sws. In terms of tissue distribution, isoform A and isoform B are expressed in the entire brain cortex; cortical cell bodies of adult brain. Sws and Pka-C3 are colocalized in all neurons.

The protein resides in the endoplasmic reticulum membrane. It carries out the reaction a 1-acyl-sn-glycero-3-phosphocholine + H2O = sn-glycerol 3-phosphocholine + a fatty acid + H(+). In terms of biological role, phospholipase B that deacylates intracellular phosphatidylcholine (PtdCho), generating glycerophosphocholine (GroPtdCho). This deacylation occurs at both sn-2 and sn-1 positions of PtdCho. Its specific chemical modification by certain organophosphorus (OP) compounds leads to distal axonopathy. Plays a role in the signaling mechanism between neurons and glia that regulates glia wrapping during development of the adult brain. Essential for membrane lipid homeostasis and cell survival in both neurons and glia of the adult brain. The protein is Neuropathy target esterase sws (sws) of Drosophila melanogaster (Fruit fly).